Reading from the N-terminus, the 325-residue chain is mRNA decay activator protein ZFP36 (325 aa).

The necessary for nuclear export stretch occupies residues methionine 1–proline 15. The necessary and sufficient for the association with mRNA decay enzymes and mRNA decay activation stretch occupies residues methionine 1 to threonine 98. Necessary for localization of ARE-containing mRNAs to processing bodies (PBs) regions lie at residues methionine 1–alanine 172 and threonine 98–glutamate 325. The segment covering proline 15–alanine 48 has biased composition (low complexity). The tract at residues proline 15–arginine 101 is disordered. Residue serine 58 is modified to Phosphoserine; by MAPKAPK2. A Phosphoserine modification is found at serine 64. The P-P-P-P-G repeat unit spans residues proline 69 to glycine 73. Residues alanine 75–arginine 101 show a composition bias toward low complexity. Serine 86 and serine 88 each carry phosphoserine. At threonine 90 the chain carries Phosphothreonine. At serine 91 the chain carries Phosphoserine. A necessary for nuclear localization region spans residues threonine 93 to proline 166. The necessary for RNA-binding stretch occupies residues threonine 95–alanine 171. 2 C3H1-type zinc fingers span residues arginine 101–glycine 129 and lysine 139–serine 167. Positions arginine 101 to arginine 192 are necessary for interaction with PABPN1. Phosphoserine is present on serine 167. The tract at residues alanine 172–glutamate 325 is necessary for mRNA decay activation. Serine 184 is subject to Phosphoserine; by MAPKAPK2. Disordered regions lie at residues phenylalanine 185–cysteine 248 and valine 260–glutamate 325. Serine 195 is subject to Phosphoserine. Residues proline 196 to serine 200 form a P-P-P-P-G repeat. Residues proline 204 to serine 214 are compositionally biased toward low complexity. Residue serine 216 is modified to Phosphoserine. One copy of the P-P-P-P-G repeat lies at proline 217–glycine 222. Serine 227 carries the post-translational modification Phosphoserine; by MAPK1; in vitro. 3 positions are modified to phosphoserine: serine 275, serine 295, and serine 322. Over residues serine 285–serine 295 the composition is skewed to low complexity. Residues alanine 311–glutamate 325 form an interaction with CNOT1 region.

As to quaternary structure, associates with cytoplasmic CCR4-NOT and PAN2-PAN3 deadenylase complexes to trigger ARE-containing mRNA deadenylation and decay processes. Part of a mRNA decay activation complex at least composed of poly(A)-specific exoribonucleases CNOT6, EXOSC2 and XRN1 and mRNA-decapping enzymes DCP1A and DCP2. Associates with the RNA exosome complex. Interacts (via phosphorylated form) with 14-3-3 proteins; these interactions promote exclusion of ZFP36 from cytoplasmic stress granules in response to arsenite treatment in a MAPKAPK2-dependent manner and does not prevent CCR4-NOT deadenylase complex recruitment or ZFP36-induced ARE-containing mRNA deadenylation and decay processes. Interacts with 14-3-3 proteins; these interactions occur in response to rapamycin in an Akt-dependent manner. Interacts with AGO2 and AGO4. Interacts (via C-terminus) with CNOT1; this interaction occurs in a RNA-independent manner and induces mRNA deadenylation. Interacts (via N-terminus) with CNOT6. Interacts with CNOT6L. Interacts (via C-terminus) with CNOT7; this interaction occurs in a RNA-independent manner, induces mRNA deadenylation and is inhibited in a phosphorylation MAPKAPK2-dependent manner. Interacts (via unphosphorylated form) with CNOT8; this interaction occurs in a RNA-independent manner and is inhibited in a phosphorylation MAPKAPK2-dependent manner. Interacts with DCP1A. Interacts (via N-terminus) with DCP2. Interacts with EDC3. Interacts (via N-terminus) with EXOSC2. Interacts with heat shock 70 kDa proteins. Interacts with KHSRP; this interaction increases upon cytokine-induced treatment. Interacts with MAP3K4; this interaction enhances the association with SH3KBP1/CIN85. Interacts with MAPKAPK2; this interaction occurs upon skeletal muscle satellite cell activation. Interacts with NCL. Interacts with NUP214; this interaction increases upon lipopolysaccharide (LPS) stimulation. Interacts with PABPC1; this interaction occurs in a RNA-dependent manner. Interacts (via hypophosphorylated form) with PABPN1 (via RRM domain and C-terminal arginine-rich region); this interaction occurs in the nucleus in a RNA-independent manner, decreases in presence of single-stranded poly(A) RNA-oligomer and in a p38 MAPK-dependent-manner and inhibits nuclear poly(A) tail synthesis. Interacts with PAN2. Interacts (via C3H1-type zinc finger domains) with PKM. Interacts (via C3H1-type zinc finger domains) with nuclear RNA poly(A) polymerase. Interacts with PPP2CA; this interaction occurs in LPS-stimulated cells and induces ZFP36 dephosphorylation, and hence may promote ARE-containing mRNAs decay. Interacts (via C-terminus) with PRR5L (via C-terminus); this interaction may accelerate ZFP36-mediated mRNA decay during stress. Interacts (via C-terminus) with SFN; this interaction occurs in a phosphorylation-dependent manner. Interacts (via extreme C-terminal region) with SH3KBP1/CIN85 (via SH3 domains); this interaction enhances MAP3K4-induced phosphorylation of ZFP36 at Ser-64 and Ser-91 and does not alter neither ZFP36 binding to ARE-containing transcripts nor TNF-alpha mRNA decay. Interacts with XRN1. Interacts (via C-terminus and Ser-184 phosphorylated form) with YWHAB; this interaction occurs in a p38/MAPKAPK2-dependent manner, increases cytoplasmic localization of ZFP36 and protects ZFP36 from Ser-184 dephosphorylation by serine/threonine phosphatase 2A, and hence may be crucial for stabilizing ARE-containing mRNAs. Interacts (via phosphorylated form) with YWHAE. Interacts (via C-terminus) with YWHAG; this interaction occurs in a phosphorylation-dependent manner. Interacts with YWHAH; this interaction occurs in a phosphorylation-dependent manner. Interacts with YWHAQ; this interaction occurs in a phosphorylation-dependent manner. Interacts with (via C-terminus) YWHAZ; this interaction occurs in a phosphorylation-dependent manner. Does not interact with SH3KBP1. Interacts (via P-P-P-P-G repeats) with GIGYF2; the interaction is direct. In terms of processing, phosphorylated. Phosphorylation at serine and/or threonine residues occurs in a p38 MAPK- and MAPKAPK2-dependent manner. Phosphorylated by MAPKAPK2 at Ser-58 and Ser-184; phosphorylation increases its stability and cytoplasmic localization, promotes binding to 14-3-3 adapter proteins and inhibits the recruitment of cytoplasmic CCR4-NOT and PAN2-PAN3 deadenylase complexes to the mRNA decay machinery, thereby inhibiting ZFP36-induced ARE-containing mRNA deadenylation and decay processes. Phosphorylation by MAPKAPK2 does not impair ARE-containing RNA-binding. Phosphorylated in a MAPKAPK2- and p38 MAPK-dependent manner upon skeletal muscle satellite cell activation; this phosphorylation inhibits ZFP36-mediated mRNA decay activity, and hence stabilizes MYOD1 mRNA. Phosphorylated by MAPK1 upon mitogen stimulation. Phosphorylated at Ser-64 and Ser-91; these phosphorylations increase in a SH3KBP1-dependent manner. Phosphorylated at serine and threonine residues in a pyruvate kinase PKM- and p38 MAPK-dependent manner. Phosphorylation at Ser-58 may participate in the PKM-mediated degradation of ZFP36 in a p38 MAPK-dependent manner. Dephosphorylated by serine/threonine phosphatase 2A at Ser-184. Post-translationally, ubiquitinated; pyruvate kinase (PKM)-dependent ubiquitination leads to proteasomal degradation through a p38 MAPK signaling pathway.

The protein resides in the nucleus. The protein localises to the cytoplasm. It localises to the cytoplasmic granule. Its subcellular location is the P-body. Functionally, zinc-finger RNA-binding protein that destabilizes numerous cytoplasmic AU-rich element (ARE)-containing mRNA transcripts by promoting their poly(A) tail removal or deadenylation, and hence provide a mechanism for attenuating protein synthesis. Acts as an 3'-untranslated region (UTR) ARE mRNA-binding adapter protein to communicate signaling events to the mRNA decay machinery. Recruits deadenylase CNOT7 (and probably the CCR4-NOT complex) via association with CNOT1, and hence promotes ARE-mediated mRNA deadenylation. Also functions by recruiting components of the cytoplasmic RNA decay machinery to the bound ARE-containing mRNAs. Self regulates by destabilizing its own mRNA. Binds to 3'-UTR ARE of numerous mRNAs. Also binds to ARE of its own mRNA. Plays a role in anti-inflammatory responses; suppresses tumor necrosis factor (TNF)-alpha production by stimulating ARE-mediated TNF-alpha mRNA decay and several other inflammatory ARE-containing mRNAs in interferon (IFN)- and/or lipopolysaccharide (LPS)-induced macrophages. Also plays a role in the regulation of dendritic cell maturation at the post-transcriptional level, and hence operates as part of a negative feedback loop to limit the inflammatory response. Promotes ARE-mediated mRNA decay of hypoxia-inducible factor HIF1A mRNA during the response of endothelial cells to hypoxia. Positively regulates early adipogenesis of preadipocytes by promoting ARE-mediated mRNA decay of immediate early genes (IEGs). Negatively regulates hematopoietic/erythroid cell differentiation by promoting ARE-mediated mRNA decay of the transcription factor STAT5B mRNA. Plays a role in maintaining skeletal muscle satellite cell quiescence by promoting ARE-mediated mRNA decay of the myogenic determination factor MYOD1 mRNA. Also associates with and regulates the expression of non-ARE-containing target mRNAs at the post-transcriptional level, such as MHC class I mRNAs. Participates in association with argonaute RISC catalytic components in the ARE-mediated mRNA decay mechanism; assists microRNA (miRNA) targeting ARE-containing mRNAs. May also play a role in the regulation of cytoplasmic mRNA decapping; enhances decapping of ARE-containing RNAs, in vitro. Involved in the delivery of target ARE-mRNAs to processing bodies (PBs). In addition to its cytosolic mRNA-decay function, affects nuclear pre-mRNA processing. Negatively regulates nuclear poly(A)-binding protein PABPN1-stimulated polyadenylation activity on ARE-containing pre-mRNA during LPS-stimulated macrophages. Also involved in the regulation of stress granule (SG) and P-body (PB) formation and fusion. Plays a role in the regulation of keratinocyte proliferation, differentiation and apoptosis. Plays a role as a tumor suppressor by inhibiting cell proliferation in breast cancer cells. The sequence is that of mRNA decay activator protein ZFP36 from Ovis aries (Sheep).